We begin with the raw amino-acid sequence, 463 residues long: RuvB-like 2 (463 aa).

Ala-2 carries the N-acetylalanine modification. Residue Lys-9 forms a Glycyl lysine isopeptide (Lys-Gly) (interchain with G-Cter in SUMO2) linkage. Residue 77 to 84 (GQPGTGKT) participates in ATP binding. At Ser-437 the chain carries Phosphoserine. Glycyl lysine isopeptide (Lys-Gly) (interchain with G-Cter in SUMO2) cross-links involve residues Lys-444 and Lys-456.

This sequence belongs to the RuvB family. Forms homohexameric rings. Can form a dodecamer with RUVBL1 made of two stacked hexameric rings; however, even though RUVBL1 and RUVBL2 are present in equimolar ratio, the oligomeric status of each hexamer is not known. Oligomerization may regulate binding to nucleic acids and conversely, binding to nucleic acids may affect the dodecameric assembly. Interaction of the complex with DHX34 results in conformational changes of the N-terminus of the RUVBL2 subunits, resulting in loss of nucleotide binding ability and ATP hydrolysis of the complex. Interacts with the transcriptional activation domain of MYC. Interacts with ATF2. Component of the RNA polymerase II holoenzyme complex. May also act to bridge the LEF1/TCF1-CTNNB1 complex and TBP. Component of the NuA4 histone acetyltransferase complex which contains the catalytic subunit KAT5/TIP60 and the subunits EP400, TRRAP/PAF400, BRD8/SMAP, EPC1, DMAP1/DNMAP1, RUVBL1/TIP49, RUVBL2, ING3, actin, ACTL6A/BAF53A, MORF4L1/MRG15, MORF4L2/MRGX, MRGBP, YEATS4/GAS41, VPS72/YL1 and MEAF6. The NuA4 complex interacts with MYC and the adenovirus E1A protein. RUVBL2 interacts with EP400. Component of a NuA4-related complex which contains EP400, TRRAP/PAF400, SRCAP, BRD8/SMAP, EPC1, DMAP1/DNMAP1, RUVBL1/TIP49, RUVBL2, actin, ACTL6A/BAF53A, VPS72 and YEATS4/GAS41. Interacts with NPAT. Component of the chromatin-remodeling INO80 complex; specifically part of a complex module associated with the helicase ATP-binding and the helicase C-terminal domain of INO80. Component of some MLL1/MLL complex, at least composed of the core components KMT2A/MLL1, ASH2L, HCFC1/HCF1, WDR5 and RBBP5, as well as the facultative components BACC1, CHD8, E2F6, HSP70, INO80C, KANSL1, LAS1L, MAX, MCRS1, MGA, MYST1/MOF, PELP1, PHF20, PRP31, RING2, RUVB1/TIP49A, RUVB2/TIP49B, SENP3, TAF1, TAF4, TAF6, TAF7, TAF9 and TEX10. Interacts with IGHMBP2. Interacts with TELO2. Interacts with HINT1. Component of a SWR1-like complex. Component of the R2TP complex composed at least of RUVBL1, RUVBL2, RPAP3 and PIHD1. Component of the PAQosome complex which is responsible for the biogenesis of several protein complexes and which consists of R2TP complex members RUVBL1, RUVBL2, RPAP3 and PIH1D1, URI complex members PFDN2, PFDN6, PDRG1, UXT and URI1 as well as ASDURF, POLR2E and DNAAF10/WDR92. Interacts with ITFG1. Interacts with ZMYND10. Interacts with WAC; WAC positively regulates MTOR activity by promoting the assembly of the TTT complex composed of TELO2, TTI1 and TTI2 and the RUVBL complex composed of RUVBL1 and RUVBL2 into the TTT-RUVBL complex which leads to the dimerization of the mTORC1 complex and its subsequent activation. Forms a complex with APPL1 and APPL2. Interacts with ZNHIT2 (via HIT-type zinc finger) in the presence of ATP or ADP; shows a stronger interaction in the presence of ADP. The RUVBL1/RUVBL2 complex interacts with ZNHIT1 (via HIT-type zinc finger), ZNHIT3 (via HIT-type zinc finger), ZNHIT6 (via HIT-type zinc finger) and DDX59/ZNHIT5 (via HIT-type zinc finger) in the presence of ADP. Interacts with NOPCHAP1; the interaction is direct and disrupted upon ATP binding. Interacts with SMG1. As to quaternary structure, (Microbial infection) Interacts with Mumps L polymerase; this interaction regulates the viral transcription. As to expression, ubiquitously expressed. Highly expressed in testis and thymus.

The protein resides in the nucleus matrix. Its subcellular location is the nucleus. The protein localises to the nucleoplasm. It is found in the cytoplasm. It localises to the membrane. The protein resides in the dynein axonemal particle. It carries out the reaction ATP + H2O = ADP + phosphate + H(+). Functionally, possesses single-stranded DNA-stimulated ATPase and ATP-dependent DNA helicase (5' to 3') activity; hexamerization is thought to be critical for ATP hydrolysis and adjacent subunits in the ring-like structure contribute to the ATPase activity. Component of the NuA4 histone acetyltransferase complex which is involved in transcriptional activation of select genes principally by acetylation of nucleosomal histones H4 and H2A. This modification may both alter nucleosome -DNA interactions and promote interaction of the modified histones with other proteins which positively regulate transcription. This complex may be required for the activation of transcriptional programs associated with oncogene and proto-oncogene mediated growth induction, tumor suppressor mediated growth arrest and replicative senescence, apoptosis, and DNA repair. The NuA4 complex ATPase and helicase activities seem to be, at least in part, contributed by the association of RUVBL1 and RUVBL2 with EP400. NuA4 may also play a direct role in DNA repair when recruited to sites of DNA damage. Component of a SWR1-like complex that specifically mediates the removal of histone H2A.Z/H2AZ1 from the nucleosome. Proposed core component of the chromatin remodeling INO80 complex which exhibits DNA- and nucleosome-activated ATPase activity and catalyzes ATP-dependent nucleosome sliding. Plays an essential role in oncogenic transformation by MYC and also modulates transcriptional activation by the LEF1/TCF1-CTNNB1 complex. May also inhibit the transcriptional activity of ATF2. Involved in the endoplasmic reticulum (ER)-associated degradation (ERAD) pathway where it negatively regulates expression of ER stress response genes. May play a role in regulating the composition of the U5 snRNP complex. In Homo sapiens (Human), this protein is RuvB-like 2 (RUVBL2).